We begin with the raw amino-acid sequence, 449 residues long: Glucose-6-phosphate isomerase (449 aa).

E291 serves as the catalytic Proton donor. Residues H312 and K426 contribute to the active site.

This sequence belongs to the GPI family.

The protein localises to the cytoplasm. It carries out the reaction alpha-D-glucose 6-phosphate = beta-D-fructose 6-phosphate. The protein operates within carbohydrate biosynthesis; gluconeogenesis. It participates in carbohydrate degradation; glycolysis; D-glyceraldehyde 3-phosphate and glycerone phosphate from D-glucose: step 2/4. Functionally, catalyzes the reversible isomerization of glucose-6-phosphate to fructose-6-phosphate. This Streptococcus pneumoniae (strain CGSP14) protein is Glucose-6-phosphate isomerase.